A 130-amino-acid chain; its full sequence is Small ribosomal subunit protein uS8A (130 aa).

It belongs to the universal ribosomal protein uS8 family. In terms of assembly, component of the small ribosomal subunit (SSU). Mature yeast ribosomes consist of a small (40S) and a large (60S) subunit. The 40S small subunit contains 1 molecule of ribosomal RNA (18S rRNA) and at least 33 different proteins. The large 60S subunit contains 3 rRNA molecules (25S, 5.8S and 5S rRNA) and at least 46 different proteins.

The protein resides in the cytoplasm. It is found in the nucleus. Its function is as follows. Component of the ribosome, a large ribonucleoprotein complex responsible for the synthesis of proteins in the cell. The small ribosomal subunit (SSU) binds messenger RNAs (mRNAs) and translates the encoded message by selecting cognate aminoacyl-transfer RNA (tRNA) molecules. The large subunit (LSU) contains the ribosomal catalytic site termed the peptidyl transferase center (PTC), which catalyzes the formation of peptide bonds, thereby polymerizing the amino acids delivered by tRNAs into a polypeptide chain. The nascent polypeptides leave the ribosome through a tunnel in the LSU and interact with protein factors that function in enzymatic processing, targeting, and the membrane insertion of nascent chains at the exit of the ribosomal tunnel. The polypeptide is Small ribosomal subunit protein uS8A (rps2201) (Schizosaccharomyces pombe (strain 972 / ATCC 24843) (Fission yeast)).